A 511-amino-acid polypeptide reads, in one-letter code: Probable pectinesterase/pectinesterase inhibitor 17 (511 aa).

Positions 1–23 (MMAFRAYIINFVILCILVASTVS) are cleaved as a signal peptide. Residues 24 to 171 (GYNQKDVKAW…SNLLCNTLAI (148 aa)) are pectinesterase inhibitor 17. N-linked (GlcNAc...) asparagine glycosylation is found at N112 and N160. The segment at 237–414 (VKQGVYSENL…LRPVLGSTKT (178 aa)) is pectinesterase 17. Substrate-binding residues include T277 and Q307. D330 functions as the Proton donor; for pectinesterase activity in the catalytic mechanism. The cysteines at positions 344 and 364 are disulfide-linked. The Nucleophile; for pectinesterase activity role is filled by D351. The substrate site is built by R418 and W420.

In the N-terminal section; belongs to the PMEI family. This sequence in the C-terminal section; belongs to the pectinesterase family. As to expression, expressed in siliques.

It localises to the secreted. Its subcellular location is the cell wall. It carries out the reaction [(1-&gt;4)-alpha-D-galacturonosyl methyl ester](n) + n H2O = [(1-&gt;4)-alpha-D-galacturonosyl](n) + n methanol + n H(+). Its pathway is glycan metabolism; pectin degradation; 2-dehydro-3-deoxy-D-gluconate from pectin: step 1/5. In terms of biological role, acts in the modification of cell walls via demethylesterification of cell wall pectin. This chain is Probable pectinesterase/pectinesterase inhibitor 17 (PME17), found in Arabidopsis thaliana (Mouse-ear cress).